Reading from the N-terminus, the 947-residue chain is Protocadherin alpha-4 (947 aa).

The first 29 residues, 1 to 29 (MEFSWGSGQESQRLLLSFLFLAIWEPGNS), serve as a signal peptide directing secretion. Cadherin domains are found at residues 30–133 (QLHY…PPTF), 134–242 (PTTQ…SPVF), 243–350 (DRSL…APEL), 351–455 (EFKS…APAF), 456–565 (AQPE…APTL), and 573–681 (SGGI…APSR). Over 30 to 697 (QLHYSIPEEA…NAEASLVDVN (668 aa)) the chain is Extracellular. The cysteines at positions 96 and 102 are disulfide-linked. Residues Asn-257 and Asn-265 are each glycosylated (N-linked (GlcNAc...) asparagine). The N-linked (GlcNAc...) asparagine glycan is linked to Asn-548. The chain crosses the membrane as a helical span at residues 698 to 718 (VYLIIAICAVSSLLVLTLLLY). The Cytoplasmic segment spans residues 719-947 (SALRCSTVPS…GNSTTDNSDQ (229 aa)). 6 PXXP repeats span residues 734 to 737 (PPKP), 774 to 777 (PSLS), 796 to 799 (PRQP), 829 to 832 (PGGP), 870 to 873 (PGNP), and 888 to 891 (PGSP). The 6 X 4 AA repeats of P-X-X-P stretch occupies residues 734-891 (PPKPVMVCSS…PDKFIIPGSP (158 aa)). A required for interaction with FYN region spans residues 738–947 (VMVCSSAVGS…GNSTTDNSDQ (210 aa)). Disordered stretches follow at residues 761 to 805 (GEYP…DWRY) and 824 to 853 (ILRAGPGGPDQQWPTVSSATPEPEAGEVSP). The segment at 897-947 (RQESANNQIDKSDFITFGKKEETKKKKKKKKGNKTQEKKEKGNSTTDNSDQ) is disordered. The span at 906–920 (DKSDFITFGKKEETK) shows a compositional bias: basic and acidic residues.

Forms homodimers in trans (molecules expressed by two different cells). Forms promiscuous heterodimers in cis (at the plasma membrane of the same cell) with other protocadherins. Interacts with FYN. In terms of tissue distribution, detected in brain.

Its subcellular location is the cell membrane. Functionally, calcium-dependent cell-adhesion protein involved in cells self-recognition and non-self discrimination. Thereby, it is involved in the establishment and maintenance of specific neuronal connections in the brain. In Rattus norvegicus (Rat), this protein is Protocadherin alpha-4.